The primary structure comprises 432 residues: Trigger factor (432 aa).

The region spanning D161–P246 is the PPIase FKBP-type domain.

Belongs to the FKBP-type PPIase family. Tig subfamily.

The protein localises to the cytoplasm. The enzyme catalyses [protein]-peptidylproline (omega=180) = [protein]-peptidylproline (omega=0). Functionally, involved in protein export. Acts as a chaperone by maintaining the newly synthesized protein in an open conformation. Functions as a peptidyl-prolyl cis-trans isomerase. In Haemophilus influenzae (strain PittEE), this protein is Trigger factor.